The sequence spans 208 residues: UPF0637 protein Bcer98_2662 (208 aa).

Belongs to the UPF0637 family.

This is UPF0637 protein Bcer98_2662 from Bacillus cytotoxicus (strain DSM 22905 / CIP 110041 / 391-98 / NVH 391-98).